The following is a 201-amino-acid chain: NADH-ubiquinone oxidoreductase 21.3 kDa subunit (201 aa).

As to quaternary structure, complex I is composed of about 40 different subunits.

It is found in the mitochondrion inner membrane. It catalyses the reaction a ubiquinone + NADH + 5 H(+)(in) = a ubiquinol + NAD(+) + 4 H(+)(out). Transfer of electrons from NADH to the respiratory chain. The immediate electron acceptor for the enzyme is believed to be ubiquinone. The sequence is that of NADH-ubiquinone oxidoreductase 21.3 kDa subunit from Neurospora crassa (strain ATCC 24698 / 74-OR23-1A / CBS 708.71 / DSM 1257 / FGSC 987).